A 164-amino-acid chain; its full sequence is UPF0262 protein Nham_0287 (164 aa).

This sequence belongs to the UPF0262 family.

This is UPF0262 protein Nham_0287 from Nitrobacter hamburgensis (strain DSM 10229 / NCIMB 13809 / X14).